Reading from the N-terminus, the 377-residue chain is Succinyl-diaminopimelate desuccinylase (377 aa).

His68 contacts Zn(2+). Asp70 is a catalytic residue. Asp101 is a binding site for Zn(2+). Glu135 acts as the Proton acceptor in catalysis. Zn(2+) contacts are provided by Glu136, Glu164, and His350.

This sequence belongs to the peptidase M20A family. DapE subfamily. Homodimer. The cofactor is Zn(2+). It depends on Co(2+) as a cofactor.

It catalyses the reaction N-succinyl-(2S,6S)-2,6-diaminopimelate + H2O = (2S,6S)-2,6-diaminopimelate + succinate. It participates in amino-acid biosynthesis; L-lysine biosynthesis via DAP pathway; LL-2,6-diaminopimelate from (S)-tetrahydrodipicolinate (succinylase route): step 3/3. Catalyzes the hydrolysis of N-succinyl-L,L-diaminopimelic acid (SDAP), forming succinate and LL-2,6-diaminopimelate (DAP), an intermediate involved in the bacterial biosynthesis of lysine and meso-diaminopimelic acid, an essential component of bacterial cell walls. In Acinetobacter baylyi (strain ATCC 33305 / BD413 / ADP1), this protein is Succinyl-diaminopimelate desuccinylase.